Consider the following 542-residue polypeptide: GMP synthase [glutamine-hydrolyzing] (542 aa).

The 191-residue stretch at 28–218 folds into the Glutamine amidotransferase type-1 domain; the sequence is MIVILDFGSQ…VYHICECEPT (191 aa). The active-site Nucleophile is cysteine 105. Catalysis depends on residues histidine 192 and glutamate 194. Residues 219–417 enclose the GMPS ATP-PPase domain; sequence WTTEAFVEEA…IGLPEEIVRR (199 aa). Residue 246–252 coordinates ATP; the sequence is SGGVDSS.

In terms of assembly, homodimer.

The catalysed reaction is XMP + L-glutamine + ATP + H2O = GMP + L-glutamate + AMP + diphosphate + 2 H(+). It participates in purine metabolism; GMP biosynthesis; GMP from XMP (L-Gln route): step 1/1. Functionally, catalyzes the synthesis of GMP from XMP. In Gloeothece citriformis (strain PCC 7424) (Cyanothece sp. (strain PCC 7424)), this protein is GMP synthase [glutamine-hydrolyzing].